The sequence spans 319 residues: MSNQLASLRDITTVVADTGDIDAIKKYQPVDATTNPSLLLKAAGLPQYASLIDDAVAWAKLQSNDAEQQLTDASDKLAVAIGKEISGTIPGRISTEVDARLSFDTAATIEKAERLVQLYEDAGIDKSRILIKIASTWEGIQAAEALEKKGIQCNLTLLFSFAQAQACAEAGVYLISPFVGRILDWYKKATGTESYAPDEDPGVVSVTKIYNYYKEHGYKTVVMGASFRNIGEIQALAGCDRLTISPALLEELANEPGDLEVKLKDNDATKTPGERLTESEFRWAMNEDAMATEKLSEGIRNFAADQEKLEATLREKLSA.

Lys-132 (schiff-base intermediate with substrate) is an active-site residue.

The protein belongs to the transaldolase family. Type 1 subfamily. As to quaternary structure, homodimer.

It localises to the cytoplasm. It catalyses the reaction D-sedoheptulose 7-phosphate + D-glyceraldehyde 3-phosphate = D-erythrose 4-phosphate + beta-D-fructose 6-phosphate. The protein operates within carbohydrate degradation; pentose phosphate pathway; D-glyceraldehyde 3-phosphate and beta-D-fructose 6-phosphate from D-ribose 5-phosphate and D-xylulose 5-phosphate (non-oxidative stage): step 2/3. Its function is as follows. Transaldolase is important for the balance of metabolites in the pentose-phosphate pathway. The sequence is that of Transaldolase from Alteromonas mediterranea (strain DSM 17117 / CIP 110805 / LMG 28347 / Deep ecotype).